Reading from the N-terminus, the 280-residue chain is Ycf3-interacting protein 1, chloroplastic (280 aa).

A chloroplast-targeting transit peptide spans 1-62; sequence MTTQIFQLPL…NNRRFGSLIV (62 aa). The interval 75–103 is disordered; the sequence is PVPLTLEQQEKEKQNRDDEEDEIDEGDVD. Residues 91-103 show a composition bias toward acidic residues; that stretch reads DDEEDEIDEGDVD. A helical transmembrane segment spans residues 255–275; it reads ALYFVSALPVIIGISVVLILF.

Belongs to the Y3IP1/CEST family. As to quaternary structure, interacts with Ycf3. In terms of tissue distribution, expressed in cotyledons, rosette and cauline leaves, stems and sepals.

The protein resides in the plastid. It is found in the chloroplast thylakoid membrane. In terms of biological role, nuclear genome-encoded factor that participates in photosystem I (PSI) biogenesis. Cooperates with the plastid genome-encoded protein PSI assembly Ycf3 in the assembly of stable PSI units in the thylakoid membrane. Involved in light-induced chloroplast development and growth. Involved in the plant response to abiotic and photooxidative stresses. May be involved in the suppression of photooxidative damage. The protein is Ycf3-interacting protein 1, chloroplastic of Arabidopsis thaliana (Mouse-ear cress).